We begin with the raw amino-acid sequence, 742 residues long: Probable serine/threonine-protein kinase PkwA (742 aa).

The 251-residue stretch at 16–266 (YRLVSRLGAG…TAELLAQLST (251 aa)) folds into the Protein kinase domain. Residues 22-30 (LGAGGMGQV) and Lys-44 contribute to the ATP site. The Proton acceptor role is filled by Asp-138. The segment at 266–394 (TDHTGDDWPP…PWSPPRVQPP (129 aa)) is disordered. Positions 301–318 (EPPPPSHGPPRPSEPLPD) are enriched in pro residues. Positions 343-356 (LEEKPIQVIHEPER) are enriched in basic and acidic residues. Residues 377–392 (PRPAAPQPPWSPPRVQ) show a composition bias toward pro residues. 7 WD repeats span residues 455–496 (ILTT…ELHT), 497–538 (LEGH…ERAV), 539–580 (FEGH…EHAV), 581–621 (LKGH…KERD), 622–663 (VLQA…ALHT), 664–705 (FEGH…EHTT), and 706–742 (LEGH…IATE).

The protein belongs to the protein kinase superfamily. Ser/Thr protein kinase family.

The catalysed reaction is L-seryl-[protein] + ATP = O-phospho-L-seryl-[protein] + ADP + H(+). It catalyses the reaction L-threonyl-[protein] + ATP = O-phospho-L-threonyl-[protein] + ADP + H(+). May play a regulatory role during the complex growth cycle and in secondary metabolite production. The chain is Probable serine/threonine-protein kinase PkwA (pkwA) from Thermomonospora curvata.